Consider the following 330-residue polypeptide: Cathepsin K (330 aa).

Residues 1–16 (MWGLEVLLLLPMASFA) form the signal peptide. A propeptide spans 17–115 (LYPEEILDTQ…TLYIPDWESR (99 aa)) (activation peptide). N-linked (GlcNAc...) asparagine glycosylation is present at Asn104. Disulfide bonds link Cys137–Cys178, Cys171–Cys211, and Cys270–Cys319. Cys140 is a catalytic residue. Catalysis depends on residues His277 and Asn297.

The protein belongs to the peptidase C1 family.

It localises to the lysosome. It is found in the secreted. Its subcellular location is the apical cell membrane. The catalysed reaction is Broad proteolytic activity. With small-molecule substrates and inhibitors, the major determinant of specificity is P2, which is preferably Leu, Met &gt; Phe, and not Arg.. Thiol protease involved in osteoclastic bone resorption and may participate partially in the disorder of bone remodeling. Displays potent endoprotease activity against fibrinogen at acid pH. May play an important role in extracellular matrix degradation. Involved in the release of thyroid hormone thyroxine (T4) by limited proteolysis of TG/thyroglobulin in the thyroid follicle lumen. In Canis lupus familiaris (Dog), this protein is Cathepsin K (CTSK).